Consider the following 163-residue polypeptide: Protein FAM167B (163 aa).

A coiled-coil region spans residues 73 to 132 (FDSMDSALEWLRRELREMQAQDRQLAGQLLRLRAQLHRLKMDQACHLHQELLDEAELELE).

This sequence belongs to the FAM167 (SEC) family.

In Homo sapiens (Human), this protein is Protein FAM167B (FAM167B).